A 226-amino-acid chain; its full sequence is dITP/XTP pyrophosphatase (226 aa).

Substrate is bound at residue threonine 14–lysine 19. Mg(2+) contacts are provided by glutamate 49 and aspartate 83. Aspartate 83 acts as the Proton acceptor in catalysis. Substrate contacts are provided by residues threonine 84, phenylalanine 176–aspartate 179, lysine 199, and histidine 204–arginine 205.

The protein belongs to the HAM1 NTPase family. As to quaternary structure, homodimer. It depends on Mg(2+) as a cofactor.

The enzyme catalyses XTP + H2O = XMP + diphosphate + H(+). The catalysed reaction is dITP + H2O = dIMP + diphosphate + H(+). It carries out the reaction ITP + H2O = IMP + diphosphate + H(+). Its function is as follows. Pyrophosphatase that catalyzes the hydrolysis of nucleoside triphosphates to their monophosphate derivatives, with a high preference for the non-canonical purine nucleotides XTP (xanthosine triphosphate), dITP (deoxyinosine triphosphate) and ITP. Seems to function as a house-cleaning enzyme that removes non-canonical purine nucleotides from the nucleotide pool, thus preventing their incorporation into DNA/RNA and avoiding chromosomal lesions. The chain is dITP/XTP pyrophosphatase from Chlorobaculum tepidum (strain ATCC 49652 / DSM 12025 / NBRC 103806 / TLS) (Chlorobium tepidum).